Consider the following 302-residue polypeptide: Citrate lyase subunit beta (302 aa).

Residues Arg-69 and Glu-132 each coordinate substrate. 2 residues coordinate Mg(2+): Glu-132 and Asp-159.

It belongs to the HpcH/HpaI aldolase family. Citrate lyase beta subunit subfamily. As to quaternary structure, oligomer with a subunit composition of (alpha,beta,gamma)6. Requires Mg(2+) as cofactor.

It localises to the cytoplasm. It carries out the reaction citrate = oxaloacetate + acetate. It catalyses the reaction (3S)-citryl-CoA = oxaloacetate + acetyl-CoA. Its function is as follows. Represents a citryl-ACP lyase. This is Citrate lyase subunit beta (citE) from Leuconostoc mesenteroides subsp. cremoris.